Here is a 309-residue protein sequence, read N- to C-terminus: Voltage-dependent anion channel-forming protein mll4386 (309 aa).

3 consecutive transmembrane segments (helical) span residues 32–52, 58–78, and 227–247; these read ILPQ…LARW, GVFN…YLSF, and IVCL…TPLF.

The protein belongs to the anion channel-forming bestrophin (TC 1.A.46) family.

Its subcellular location is the cell membrane. In Mesorhizobium japonicum (strain LMG 29417 / CECT 9101 / MAFF 303099) (Mesorhizobium loti (strain MAFF 303099)), this protein is Voltage-dependent anion channel-forming protein mll4386.